Here is a 342-residue protein sequence, read N- to C-terminus: MTQGKHCVPQGSTILVTGANGYLASAITKLLLELGYKVRGTVRAPKPWLNHYFEERYGSGNFETVIITDFQDTDTWDQALEGISGIAHVAHDMAWSSDPNIAVRGPVKAILNILDIASKHDSVKRIVLTSTIGAAPCIDINGNPATTPVNDDDWNDFAVEAAWSDSTPEEQRVYINHCAAKVEGDRKALQWVQDNQPGFDVNIVMPGFSVGRILHASITGQSMREIVGLLQGKPTKMFEFVPPWFINTEDVARLHVIALLKPEVSSQRIFACASPFTWKEVVSILRELDPSNTLIPDAPDENRRPCHVIPATEAERLIQDFFGRNGFTSLRDSLASAVTKSA.

It belongs to the NAD(P)-dependent epimerase/dehydratase family. Dihydroflavonol-4-reductase subfamily.

The protein operates within secondary metabolite biosynthesis; terpenoid biosynthesis. Ketoreductase; part of the gene cluster that mediates the biosynthesis of novofumigatonin, a heavily oxygenated meroterpenoid containing a unique orthoester moiety. The first step of the pathway is the synthesis of 3,5-dimethylorsellinic acid (DMOA) by the polyketide synthase nvfA via condensation of one acetyl-CoA starter unit with 3 malonyl-CoA units and 2 methylations. DMOA is then converted to farnesyl-DMOA by the farnesyltransferase nvfB. Epoxydation by FAD-dependent monooxygenase nvfK, followed by a protonation-initiated cyclization catalyzed by the terpene cyclase nvfL leads to the production of asnavolin H. The short chain dehydrogenase nvfC then as a 3-OH dehydrogenase of asnovolin H to yield chemesin D. There are two branches to synthesize asnovolin A from chemesin D. In one branch, chemesin D undergoes Baeyer-Villiger oxidation by nvfH, methylation by nvfJ, and enoyl reduction by the nvfM D enoylreductase that reduces the double bond between C-5'and C-6', to form respectively asnovolin I, asnovolin K, and asnovolin A. In the other branch, the methylation precedes the Baeyer-Villiger oxidation and the enoyl reduction to yield asnovolin A via the asnovolin J intermediate. Asnovolin A is further converted to fumigatonoid A by the Fe(II)/2-oxoglutarate-dependent dioxygenase nvfI that catalyzes an endoperoxidation reaction. The alpha/beta hydrolase nvfD then acts as an epimerase that converts fumigatonoid A to its C-5' epimer, which then undergoes spontaneous or nvfD-catalyzed lactonization. The following step utilizes the ketoreductase nvfG to produce fumigatonoid B. The dioxygenase nvfE further converts fumigatonoid B into fumigatonoid C. Finally the Fe(II)/2-oxoglutarate-dependent dioxygenase nvfF catalyzes two rounds of oxidation to transform fumigatonoid C into the end product, novofumigatonin A. The chain is Ketoreductase nvfG from Aspergillus novofumigatus (strain IBT 16806).